The sequence spans 212 residues: Thymidylate kinase (212 aa).

11-18 contributes to the ATP binding site; sequence GPEGAGKT.

Belongs to the thymidylate kinase family.

It carries out the reaction dTMP + ATP = dTDP + ADP. Phosphorylation of dTMP to form dTDP in both de novo and salvage pathways of dTTP synthesis. The sequence is that of Thymidylate kinase from Streptococcus pneumoniae serotype 2 (strain D39 / NCTC 7466).